The sequence spans 607 residues: BTB/POZ domain-containing protein DOT3 (607 aa).

One can recognise a BTB domain in the interval 52–121 (TDLSIQVNDI…CYNLPLDLNP (70 aa)). The NPH3 domain maps to 211–487 (RCLYNDIATL…VQINTQVLFS (277 aa)). Tyr428 is modified (phosphotyrosine). Disordered stretches follow at residues 498–520 (DKLP…SRDN) and 573–607 (KSFQ…MSMS). Basic and acidic residues-rich tracts occupy residues 499 to 520 (KLPE…SRDN) and 577 to 586 (TKREDEETRE). Residues 511-563 (REDKRMSRDNEIIKTLKEELENVKKKMSELQSDYNELQQEYERLSSKQKSSHN) adopt a coiled-coil conformation.

The protein belongs to the NPH3 family. Expressed in emerging leaf primordia.

Its pathway is protein modification; protein ubiquitination. Functionally, may act as a substrate-specific adapter of an E3 ubiquitin-protein ligase complex (CUL3-RBX1-BTB) which mediates the ubiquitination and subsequent proteasomal degradation of target proteins. Involved in leaf vasculature patterning. This Arabidopsis thaliana (Mouse-ear cress) protein is BTB/POZ domain-containing protein DOT3.